We begin with the raw amino-acid sequence, 171 residues long: Mitochondrial import inner membrane translocase subunit Tim17-A (171 aa).

Cysteine 9 and cysteine 78 form a disulfide bridge. A run of 3 helical transmembrane segments spans residues 17-37 (CGGAFTMGTIGGGIFQAFKGF), 63-77 (GGSFAVWGGLFSTID), and 113-133 (VGSAAMGGILLALIEGAGILL). The segment at 144 to 171 (GPQFTEDHSQLPSSQLPSSPFGDYRQYQ) is disordered. Residues 153-163 (QLPSSQLPSSP) show a composition bias toward low complexity.

This sequence belongs to the Tim17/Tim22/Tim23 family. As to quaternary structure, component of the TIM23 complex at least composed of TIMM23, TIMM17 (TIMM17A or TIMM17B) and TIMM50. The complex interacts with the TIMM44 component of the PAM complex and with DNAJC15. Degraded by YMEL1 downstream of the integrated stress response (ISR).

It localises to the mitochondrion inner membrane. In terms of biological role, essential component of the TIM23 complex, a complex that mediates the translocation of transit peptide-containing proteins across the mitochondrial inner membrane. In Mus musculus (Mouse), this protein is Mitochondrial import inner membrane translocase subunit Tim17-A (Timm17a).